Here is a 207-residue protein sequence, read N- to C-terminus: Small ribosomal subunit protein uS3c (207 aa).

The 71-residue stretch at 39–109 (IRDYIFTNLL…QLKINIIDVT (71 aa)) folds into the KH type-2 domain.

The protein belongs to the universal ribosomal protein uS3 family. As to quaternary structure, part of the 30S ribosomal subunit.

The protein localises to the plastid. Its subcellular location is the chloroplast. The sequence is that of Small ribosomal subunit protein uS3c (rps3) from Cyanidium caldarium (Red alga).